The primary structure comprises 1375 residues: Mediator of RNA polymerase II transcription subunit 13 (1375 aa).

The tract at residues 1 to 51 (MKASEMARPPMRPGNPHAFASPATTPSRTASPNNAQGANVRTTQGGNQAGA) is disordered. A compositionally biased stretch (polar residues) spans 22-51 (PATTPSRTASPNNAQGANVRTTQGGNQAGA). 2 coiled-coil regions span residues 182-216 (ADDSNRRTSKKKAKMDSLEQNIEKWRMSVQRWLSR) and 297-324 (QLERDKILDMQRKAKKAEEDAMRRKDEA). Over residues 313–324 (AEEDAMRRKDEA) the composition is skewed to basic and acidic residues. 7 disordered regions span residues 313 to 333 (AEEDAMRRKDEAPGLYPSSPF), 350 to 370 (YPTPPDGIVPGTGISSTDTPS), 397 to 417 (YTTTDNQQHASTSPTFPAPLE), 537 to 581 (ATSP…PASL), 660 to 689 (RAVSDDSASDSESETSDMSEGSPEDPVDTH), 841 to 862 (QAKGQQRPPPRKPNESNAIPSN), and 1233 to 1285 (TPTT…AADP). A compositionally biased stretch (polar residues) spans 397–411 (YTTTDNQQHASTSPT). The segment covering 666 to 685 (SASDSESETSDMSEGSPEDP) has biased composition (acidic residues). The span at 1233–1259 (TPTTPAPSNSSAQANTNTPGSTPQTGV) shows a compositional bias: polar residues.

Belongs to the Mediator complex subunit 13 family. As to quaternary structure, component of the SRB8-11 complex, which itself associates with the Mediator complex.

The protein localises to the nucleus. Component of the SRB8-11 complex. The SRB8-11 complex is a regulatory module of the Mediator complex which is itself involved in regulation of basal and activated RNA polymerase II-dependent transcription. The SRB8-11 complex may be involved in the transcriptional repression of a subset of genes regulated by Mediator. It may inhibit the association of the Mediator complex with RNA polymerase II to form the holoenzyme complex. This Phaeosphaeria nodorum (strain SN15 / ATCC MYA-4574 / FGSC 10173) (Glume blotch fungus) protein is Mediator of RNA polymerase II transcription subunit 13 (SSN2).